The chain runs to 553 residues: Formate--tetrahydrofolate ligase (553 aa).

62 to 69 (TPAGEGKS) contacts ATP.

Belongs to the formate--tetrahydrofolate ligase family.

It catalyses the reaction (6S)-5,6,7,8-tetrahydrofolate + formate + ATP = (6R)-10-formyltetrahydrofolate + ADP + phosphate. The protein operates within one-carbon metabolism; tetrahydrofolate interconversion. The protein is Formate--tetrahydrofolate ligase of Limosilactobacillus reuteri subsp. reuteri (strain JCM 1112) (Lactobacillus reuteri).